The primary structure comprises 505 residues: Maturase K (505 aa).

The protein belongs to the intron maturase 2 family. MatK subfamily.

The protein resides in the plastid. Its subcellular location is the chloroplast. Usually encoded in the trnK tRNA gene intron. Probably assists in splicing its own and other chloroplast group II introns. This chain is Maturase K, found in Sciadopitys verticillata (Japanese umbrella-pine).